The sequence spans 395 residues: S-adenosylmethionine synthase (395 aa).

Position 16 (histidine 16) interacts with ATP. Aspartate 18 is a binding site for Mg(2+). Residue glutamate 44 coordinates K(+). The L-methionine site is built by glutamate 57 and glutamine 100. Positions 100 to 110 (QSPDIAGGVNL) are flexible loop. Residues 175–177 (DGK), 242–243 (RF), aspartate 251, 257–258 (RK), alanine 274, and lysine 278 each bind ATP. Aspartate 251 contributes to the L-methionine binding site. Position 282 (lysine 282) interacts with L-methionine.

The protein belongs to the AdoMet synthase family. Homotetramer; dimer of dimers. The cofactor is Mg(2+). It depends on K(+) as a cofactor.

The protein resides in the cytoplasm. The catalysed reaction is L-methionine + ATP + H2O = S-adenosyl-L-methionine + phosphate + diphosphate. Its pathway is amino-acid biosynthesis; S-adenosyl-L-methionine biosynthesis; S-adenosyl-L-methionine from L-methionine: step 1/1. In terms of biological role, catalyzes the formation of S-adenosylmethionine (AdoMet) from methionine and ATP. The overall synthetic reaction is composed of two sequential steps, AdoMet formation and the subsequent tripolyphosphate hydrolysis which occurs prior to release of AdoMet from the enzyme. The polypeptide is S-adenosylmethionine synthase (Thermus thermophilus (strain ATCC BAA-163 / DSM 7039 / HB27)).